Consider the following 490-residue polypeptide: Protein dead ringer homolog (490 aa).

Over residues 1 to 33 (MVEDQRRQLMEEEDEERRLILEEQRRRMMRADR) the composition is skewed to basic and acidic residues. 2 disordered regions span residues 1-77 (MVED…AHID) and 106-135 (ITQS…HGGS). A compositionally biased stretch (acidic residues) spans 34–50 (DEEEEEEEEEEEEEREE). Positions 51 to 76 (DDGRRSEDEMREDEPPGRRETSHAHI) are enriched in basic and acidic residues. The span at 106 to 117 (ITQSPPLTNGSN) shows a compositional bias: polar residues. Positions 202–294 (DSKRKEFLDD…YLYPYECEKK (93 aa)) constitute an ARID domain. Residues 298-369 (SPSELQSAID…PPRLSPSTSP (72 aa)) are disordered. Over residues 316-325 (PSYHSPHMHP) the composition is skewed to basic residues. Positions 389–479 (AAMLAELAER…GVLYPRGGTR (91 aa)) constitute an REKLES domain.

Its subcellular location is the nucleus. Transcription factor involved in skeletogenesis and oral ectoderm patterning. The protein is Protein dead ringer homolog (dri) of Strongylocentrotus purpuratus (Purple sea urchin).